Here is a 215-residue protein sequence, read N- to C-terminus: Large ribosomal subunit protein bL25 (215 aa).

Positions 170 to 215 are disordered; it reads DPDTSVASVTPPTTEEDLDTDDVDENAEPELVGAENDSADEESENK. 2 stretches are compositionally biased toward acidic residues: residues 183 to 197 and 206 to 215; these read TEEDLDTDDVDENAE and DSADEESENK.

Belongs to the bacterial ribosomal protein bL25 family. CTC subfamily. As to quaternary structure, part of the 50S ribosomal subunit; part of the 5S rRNA/L5/L18/L25 subcomplex. Contacts the 5S rRNA. Binds to the 5S rRNA independently of L5 and L18.

Its function is as follows. This is one of the proteins that binds to the 5S RNA in the ribosome where it forms part of the central protuberance. This chain is Large ribosomal subunit protein bL25, found in Oceanobacillus iheyensis (strain DSM 14371 / CIP 107618 / JCM 11309 / KCTC 3954 / HTE831).